Reading from the N-terminus, the 461-residue chain is Probable ribonuclease FAU-1 (461 aa).

An S1 motif domain is found at 89-158 (GAVFYGEVTE…ARPSLATALR (70 aa)).

Belongs to the FAU-1 family.

Probable RNase involved in rRNA stability through maturation and/or degradation of precursor rRNAs. Binds to RNA in loop regions with AU-rich sequences. This is Probable ribonuclease FAU-1 from Natronomonas pharaonis (strain ATCC 35678 / DSM 2160 / CIP 103997 / JCM 8858 / NBRC 14720 / NCIMB 2260 / Gabara) (Halobacterium pharaonis).